Reading from the N-terminus, the 218-residue chain is Putative copper transporter crmD (218 aa).

2 helical membrane passes run 37-57 (YSLTLLFLFALAVFNRFLGVL) and 176-196 (MLAVMTFNVGVLCAVVGGIVV).

This sequence belongs to the copper transporter (Ctr) (TC 1.A.56) family. SLC31A subfamily.

Its subcellular location is the membrane. The catalysed reaction is Cu(2+)(in) = Cu(2+)(out). Functionally, putative copper transporter; part of the crm gene cluster that mediates the biosynthesis of a yet unidentified copper-responsive metabolite. Probably involved in the transport of copper, even if it does not act as a major copper transporter. In contrast to crmA, is not involved in the biosynthesis of fumivalines or fumicicolins. This chain is Putative copper transporter crmD, found in Aspergillus fumigatus (strain ATCC MYA-4609 / CBS 101355 / FGSC A1100 / Af293) (Neosartorya fumigata).